An 808-amino-acid chain; its full sequence is MAETAAGVGRFKTNYAVERKIEPFYKGGKAQLDQTGQHLFCVCGTRVNILEVASGAVLRSLEQEDQEDITAFDLSPDNEVLVTASRALLLAQWAWQEGSVTRLWKAIHTAPVATMAFDPTSTLLATGGCDGAVRVWDIVRHYGTHHFRGSPGVVHLVAFHPDPTRLLLFSSATDAAIRVWSLQDRSCLAVLTAHYSAVTSLAFSADGHTMLSSGRDKICIIWDLQSCQATRTVPVFESVEAAVLLPEEPVSQLGVKSPGLYFLTAGDQGTLRVWEAASGQCVYTQAQPPGPGQELTHCTLAHTAGVVLTATADHNLLLYEARSLRLQKQFAGYSEEVLDVRFLGPEDSHVVVASNSPCLKVFELQTSACQILHGHTDIVLALDVFRKGWLFASCAKDQSVRIWRMNKAGQVMCVAQGSGHTHSVGTVCCSRLKESFLVTGSQDCTVKLWPLPKALLSKNTAPDNGPILLQAQTTQRCHDKDINSVAIAPNDKLLATGSQDRTAKLWALPQCQLLGVFSGHRRGLWCVQFSPMDQVLATASADGTIKLWALQDFSCLKTFEGHDASVLKVAFVSRGTQLLSSGSDGLVKLWTIKNNECVRTLDAHEDKVWGLHCSRLDDHALTGASDSRVILWKDVTEAEQAEEQARQEEQVVRQQELDNLLHEKRYLRALGLAISLDRPHTVLTVIQAIRRDPEACEKLEATMLRLRRDQKEALLRFCVTWNTNSRHCHEAQAVLGVLLRREAPEELLAYEGVRAALEALLPYTERHFQRLSRTLQAAAFLDFLWHNMKLPVPAAAPTPWETHKGALP.

A2 bears the N-acetylalanine mark. 13 WD repeats span residues 64 to 105 (EDQE…RLWK), 107 to 146 (IHTAPVATMAFDPTSTLLATGGCDGAVRVWDIVRHYGTHH), 149 to 190 (GSPG…CLAV), 193 to 232 (AHYSAVTSLAFSADGHTMLSSGRDKICIIWDLQSCQATRT), 245 to 284 (LPEEPVSQLGVKSPGLYFLTAGDQGTLRVWEAASGQCVYT), 290 to 329 (GPGQELTHCTLAHTAGVVLTATADHNLLLYEARSLRLQKQ), 332 to 372 (GYSE…CQIL), 374 to 413 (GHTDIVLALDVFRKGWLFASCAKDQSVRIWRMNKAGQVMC), 419 to 459 (GHTH…LSKN), 477 to 516 (CHDKDINSVAIAPNDKLLATGSQDRTAKLWALPQCQLLGV), 519 to 560 (GHRR…KTFE), 562 to 602 (HDAS…RTLD), and 604 to 642 (HEDKVWGLHCSRLDDHALTGASDSRVILWKDVTEAEQAE). S257 carries the phosphoserine modification. A Glycyl lysine isopeptide (Lys-Gly) (interchain with G-Cter in SUMO2) cross-link involves residue K407.

As to quaternary structure, part of the small subunit (SSU) processome, composed of more than 70 proteins and the RNA chaperone small nucleolar RNA (snoRNA) U3.

It is found in the nucleus. Its subcellular location is the nucleolus. Functionally, part of the small subunit (SSU) processome, first precursor of the small eukaryotic ribosomal subunit. During the assembly of the SSU processome in the nucleolus, many ribosome biogenesis factors, an RNA chaperone and ribosomal proteins associate with the nascent pre-rRNA and work in concert to generate RNA folding, modifications, rearrangements and cleavage as well as targeted degradation of pre-ribosomal RNA by the RNA exosome. This chain is Transducin beta-like protein 3, found in Homo sapiens (Human).